The following is a 109-amino-acid chain: Nucleoid-associated protein Sputw3181_1707 (109 aa).

Belongs to the YbaB/EbfC family. As to quaternary structure, homodimer.

It localises to the cytoplasm. The protein resides in the nucleoid. Functionally, binds to DNA and alters its conformation. May be involved in regulation of gene expression, nucleoid organization and DNA protection. The chain is Nucleoid-associated protein Sputw3181_1707 from Shewanella sp. (strain W3-18-1).